Reading from the N-terminus, the 199-residue chain is Elongation factor Ts (199 aa).

An involved in Mg(2+) ion dislocation from EF-Tu region spans residues 82–85 (TDFV).

The protein belongs to the EF-Ts family.

Its subcellular location is the cytoplasm. Functionally, associates with the EF-Tu.GDP complex and induces the exchange of GDP to GTP. It remains bound to the aminoacyl-tRNA.EF-Tu.GTP complex up to the GTP hydrolysis stage on the ribosome. This chain is Elongation factor Ts, found in Leptospira interrogans serogroup Icterohaemorrhagiae serovar copenhageni (strain Fiocruz L1-130).